The sequence spans 71 residues: Biotinylated protein TB7.3 homolog (71 aa).

Residues 2 to 71 (AEDVRAEIVA…QAGDLIAVIS (70 aa)) form the Biotinyl-binding domain. Lysine 37 carries the post-translational modification N6-biotinyllysine.

The polypeptide is Biotinylated protein TB7.3 homolog (Mycobacterium leprae (strain TN)).